Reading from the N-terminus, the 263-residue chain is Ribosomal RNA large subunit methyltransferase E (263 aa).

The tract at residues 1–34 (MSSAEGPKSGGGSKGSKSEASSRVRGSAPTGSRD) is disordered. Residues Gly-102, Trp-104, Asp-126, Asp-142, and Asp-166 each coordinate S-adenosyl-L-methionine. Lys-206 functions as the Proton acceptor in the catalytic mechanism.

The protein belongs to the class I-like SAM-binding methyltransferase superfamily. RNA methyltransferase RlmE family.

The protein resides in the cytoplasm. The enzyme catalyses uridine(2552) in 23S rRNA + S-adenosyl-L-methionine = 2'-O-methyluridine(2552) in 23S rRNA + S-adenosyl-L-homocysteine + H(+). Specifically methylates the uridine in position 2552 of 23S rRNA at the 2'-O position of the ribose in the fully assembled 50S ribosomal subunit. This Rhodospirillum rubrum (strain ATCC 11170 / ATH 1.1.1 / DSM 467 / LMG 4362 / NCIMB 8255 / S1) protein is Ribosomal RNA large subunit methyltransferase E.